A 343-amino-acid polypeptide reads, in one-letter code: Glucokinase (343 aa).

18-23 (GDIGGT) contributes to the ATP binding site.

It belongs to the bacterial glucokinase family.

The protein localises to the cytoplasm. The catalysed reaction is D-glucose + ATP = D-glucose 6-phosphate + ADP + H(+). This is Glucokinase from Brucella melitensis biotype 1 (strain ATCC 23456 / CCUG 17765 / NCTC 10094 / 16M).